The following is a 309-amino-acid chain: Elongation factor Ts (309 aa).

The tract at residues 82 to 85 (TDFV) is involved in Mg(2+) ion dislocation from EF-Tu.

Belongs to the EF-Ts family.

It is found in the cytoplasm. Functionally, associates with the EF-Tu.GDP complex and induces the exchange of GDP to GTP. It remains bound to the aminoacyl-tRNA.EF-Tu.GTP complex up to the GTP hydrolysis stage on the ribosome. In Rickettsia bellii (strain OSU 85-389), this protein is Elongation factor Ts.